Here is an 84-residue protein sequence, read N- to C-terminus: Large ribosomal subunit protein bL27 (84 aa).

Residues 1-21 (MAHKKGGGSTKNGRDSNPKYL) are disordered.

The protein belongs to the bacterial ribosomal protein bL27 family.

This chain is Large ribosomal subunit protein bL27, found in Chlorobaculum parvum (strain DSM 263 / NCIMB 8327) (Chlorobium vibrioforme subsp. thiosulfatophilum).